A 106-amino-acid chain; its full sequence is Small ribosomal subunit protein bS18 (106 aa).

Basic and acidic residues predominate over residues 1 to 22 (MSEETTVRPERTERSERPERPQ). The tract at residues 1 to 34 (MSEETTVRPERTERSERPERPQYRGNGPRKRRPF) is disordered.

Belongs to the bacterial ribosomal protein bS18 family. In terms of assembly, part of the 30S ribosomal subunit. Forms a tight heterodimer with protein bS6.

Functionally, binds as a heterodimer with protein bS6 to the central domain of the 16S rRNA, where it helps stabilize the platform of the 30S subunit. The chain is Small ribosomal subunit protein bS18 from Geobacter metallireducens (strain ATCC 53774 / DSM 7210 / GS-15).